A 118-amino-acid polypeptide reads, in one-letter code: Iron-sulfur cluster assembly protein CyaY (118 aa).

This sequence belongs to the frataxin family.

Functionally, involved in iron-sulfur (Fe-S) cluster assembly. May act as a regulator of Fe-S biogenesis. This Buchnera aphidicola subsp. Baizongia pistaciae (strain Bp) protein is Iron-sulfur cluster assembly protein CyaY.